Here is a 1317-residue protein sequence, read N- to C-terminus: DNA-directed RNA polymerase subunit beta' (1317 aa).

Residues Cys214, Cys286, Cys293, and Cys296 each coordinate Zn(2+). Residues Arg1279–Asp1317 form a disordered region. The segment covering Gln1288–Asp1317 has biased composition (acidic residues).

The protein belongs to the RNA polymerase beta' chain family. RpoC2 subfamily. In cyanobacteria the RNAP catalytic core is composed of 2 alpha, 1 beta, 1 beta', 1 gamma and 1 omega subunit. When a sigma factor is associated with the core the holoenzyme is formed, which can initiate transcription. Requires Zn(2+) as cofactor.

The enzyme catalyses RNA(n) + a ribonucleoside 5'-triphosphate = RNA(n+1) + diphosphate. DNA-dependent RNA polymerase catalyzes the transcription of DNA into RNA using the four ribonucleoside triphosphates as substrates. The protein is DNA-directed RNA polymerase subunit beta' of Synechocystis sp. (strain ATCC 27184 / PCC 6803 / Kazusa).